The following is a 1408-amino-acid chain: ABC multidrug transporter MDR1 (1408 aa).

Residues 79–88 (IAASSDTLRN) show a composition bias toward polar residues. The tract at residues 79–102 (IAASSDTLRNSPLEKPISNAFSKS) is disordered. A run of 2 helical transmembrane segments spans residues 147–167 (FAAP…VAAG) and 223–243 (LYLM…MFIW). In terms of domain architecture, ABC transmembrane type-1 1 spans 157-464 (VLGLVLAVAA…LAPELAAVTK (308 aa)). Asparagine 244 carries N-linked (GlcNAc...) asparagine glycosylation. 4 consecutive transmembrane segments (helical) span residues 296–316 (KVAL…LAFV), 321–341 (LAGA…IMMT), 408–428 (IMFF…GILV), and 436–456 (GIVI…AMLA). Residues 499-744 (ISFENVKFHY…ENGPYAQLVN (246 aa)) form the ABC transporter 1 domain. 534–541 (GASGSGKS) is a binding site for ATP. The N-linked (GlcNAc...) asparagine glycan is linked to asparagine 606. The next 2 membrane-spanning stretches (helical) occupy residues 838 to 858 (IIAF…AILF) and 882 to 902 (LWYF…SAGF). In terms of domain architecture, ABC transmembrane type-1 2 spans 838–1125 (IIAFIAAICA…VFTFVPDASK (288 aa)). N-linked (GlcNAc...) asparagine glycosylation occurs at asparagine 934. Transmembrane regions (helical) follow at residues 952–972 (GLFG…IGGC), 981–999 (LLAL…GGYI), 1072–1092 (GLTF…IIDA), and 1099–1119 (FYTV…VFTF). Asparagine 1127 and asparagine 1182 each carry an N-linked (GlcNAc...) asparagine glycan. Residues 1162 to 1402 (VRIEGVHFRY…KGGYYELVQM (241 aa)) enclose the ABC transporter 2 domain. 1197-1204 (GPSGCGKS) provides a ligand contact to ATP. N-linked (GlcNAc...) asparagine glycosylation occurs at asparagine 1404.

The protein belongs to the ABC transporter superfamily. ABCB family. Multidrug resistance exporter (TC 3.A.1.201) subfamily.

It is found in the cell membrane. The enzyme catalyses itraconazole(in) + ATP + H2O = itraconazole(out) + ADP + phosphate + H(+). It catalyses the reaction voriconazole(in) + ATP + H2O = voriconazole(out) + ADP + phosphate + H(+). The catalysed reaction is fluconazole(in) + ATP + H2O = fluconazole(out) + ADP + phosphate + H(+). Functionally, pleiotropic ABC efflux transporter that confers resistance to structurally and functionally unrelated compounds including azoles such as fluconazole (FLC), itraconazole (ITC), posaconazole (POS), and voriconazole (VRC). The sequence is that of ABC multidrug transporter MDR1 from Cryptococcus neoformans var. grubii serotype A (strain H99 / ATCC 208821 / CBS 10515 / FGSC 9487) (Filobasidiella neoformans var. grubii).